The sequence spans 1044 residues: Protein ITPRID1 (1044 aa).

A compositionally biased stretch (polar residues) spans 1 to 14 (MMAQKSQGSDNLQE). Disordered stretches follow at residues 1–20 (MMAQ…EKSK), 230–251 (EEKA…EHRR), 388–489 (MEEV…SSQE), and 583–607 (PEGA…HTQD). Residues 388–398 (MEEVQSFEEET) show a composition bias toward acidic residues. 2 stretches are compositionally biased toward polar residues: residues 460-469 (HSLVSSQDCQ) and 480-489 (RASMSFSSQE). Residues 896–937 (SRDMSEEEREEAEQLQTLREALRQQVAELEFQLGDRAQQIRE) adopt a coiled-coil conformation.

The sequence is that of Protein ITPRID1 from Homo sapiens (Human).